We begin with the raw amino-acid sequence, 122 residues long: Large ribosomal subunit protein uL14 (122 aa).

The protein belongs to the universal ribosomal protein uL14 family. Part of the 50S ribosomal subunit. Forms a cluster with proteins L3 and L19. In the 70S ribosome, L14 and L19 interact and together make contacts with the 16S rRNA in bridges B5 and B8.

Functionally, binds to 23S rRNA. Forms part of two intersubunit bridges in the 70S ribosome. The sequence is that of Large ribosomal subunit protein uL14 from Saccharopolyspora erythraea (strain ATCC 11635 / DSM 40517 / JCM 4748 / NBRC 13426 / NCIMB 8594 / NRRL 2338).